The primary structure comprises 154 residues: AP-1 complex subunit sigma-2 (154 aa).

This sequence belongs to the adaptor complexes small subunit family. In terms of assembly, adaptor protein complex 1 (AP-1) is a heterotetramer composed of two large adaptins (gamma-type subunit and beta-type subunit), a medium adaptin (mu-type subunit) and a small adaptin (sigma-type subunit).

The protein localises to the golgi apparatus. The protein resides in the trans-Golgi network. Its subcellular location is the cytoplasmic vesicle. It is found in the clathrin-coated vesicle membrane. Its function is as follows. Subunit of clathrin-associated adaptor protein complex 1 that plays a role in protein sorting in the trans-Golgi network (TGN) and endosomes. The AP complexes mediate the recruitment of clathrin to membranes and the recognition of sorting signals within the cytosolic tails of transmembrane cargo molecules. Also involved in early steps of phagocytosis and macropinocytosis. This chain is AP-1 complex subunit sigma-2 (ap1s2), found in Dictyostelium discoideum (Social amoeba).